We begin with the raw amino-acid sequence, 1658 residues long: MATDGASCEPDFSRAPEDAAGATAEAAKKEFDVDTLSKSELRMLLSVMEGELEARDLVIEALRARRKEVFIQERYGRFNLNDPFLALQRDYEAGAGDKEKKPVCTNPLSILEAVMAHCRKMQERMSTQLAAAESRQKKLEMEKLQLQAVEQEHQKLAARLEEERGKNKHVVLMLVKECKQLSGKVIEEAQKLEEVMVKLEEEKTKTSALEEELSAEKRRSTEMEAQMEKQLSEFDTEREQLRAKLHREEAHTTDLKEEIDKMKKMIEQLKRGNDSKPSLSLPRKTKDRRMVSISVGTEGPVTRSVACQTDLVIESTDHVKKLPLTVPVKPSAGSPLVPANTKGNVCTGAALGRPGIDRQASHGDLIGSSPPTVPPPSANRIEENGPSAGSASSTPPLPNSTAPPTVQTPGIAPQSYSQAPPVHSLHSPCANASLHPGLNPRIQAARFRFQGNANDPDQNGNTTQSPPSRDVSPTSRDNLVAKQLARNTVTQALSRFTSPQAGAPPRPGAAPTGDGGTCPPVGRTSLKTPGVARVDRGNPPPIPPKKPGLSQTPSPPHPQLKVIMDSSRASNAGAKVDNKTMASPPSSLPQGNRVINEENLPKSSSPQLPPKPSIDLTVAPAGCAVSALATSQVGAWPAETPGLNQPACSESSLVIPTTIAFCSSINTVSASSCRTGASDSLLVTASGWSPSLTPLLMSGGPAPLAGRPTLLQQAATQGNVTLLSMLLNEEGLDINYSCEDGHSALYSAAKNGHTDCVRLLLNAGAQVNAADTNGFTPLCAAAAQGHFKCVELLISYDANINHAADEGQTPLYLACKNGNKECIQLLLEAGTDRSVKTRDGWTPVHAAVDTGNVDSLKLLMYHRAPACRNSLHEEESESVVFDLDQGEESPEGTSKPVVPAELINHADREGWTAAHIAASKGFKNCLEILCMHGGLEPERKDKCHRTAHDVATDDCKHLLENLNALKIPLRISVGETEPGSYGSDDFECENTICALNIRKQTSWDDFSKAVSQALTNHFQAISSDGWWSLEDVTLNNTTDSSIGLGTSSVRSIMLGNAPWSAGQSFTQSPWDFMKKNKAERVTVLLSGPQEGCLSSVTYASMIPLQMLQNYLRLVEQYHNVIFHGPEGSLQDYIAHQLALCMKHRQMAAGFTCEIVRAEVDAGFSKEQLIDLFINSACLIPVKQSPVNKKIIIILENLEKSSLSELLGDFLAPLENRSTESPWTFQKGNGTSECYYFHENCFLMGTIAKACLQGSDLLVQQHFRWVQLRWDGEPMQGLLQRFLRRKVVNKFRGQVPSPCDPVCKTVDWALAVWRQLNSCLARLGTPEALLGPKYFLSCPVVPGHAQATVKWMAKLWNAIIAPRVQEAILSRASVKRQPGLGLATAKKHPSQGQQAVVKAALSILLNKAVLHGCPLPRAELDQHAADFRGGSFPLSIVSSYHSYSKKKGESGAWRKVSTSPRKKSGRFSPPSWNKPGLSEEGIRIKAVSQQNCNRNASLSKQKSLENDLSLTLNLDQRLSLGSDDEADLVKELQSMCSSRSESDISKIADSRDDLRRFDGSRNNPAFSTVNPRMPVSPKEVSPLSSHETTECSNSQSKIELGVSRVKSFLPVPRSKVTQCSQNTKRSSSSSNTRQIEINNNTKEDIWNFHQNEQVEKPNQ.

5 disordered regions span residues 1 to 24 (MATDGASCEPDFSRAPEDAAGATA), 203 to 235 (KTKTSALEEELSAEKRRSTEMEAQMEKQLSEFD), 348 to 437 (GAAL…LHPG), 451 to 475 (GNANDPDQNGNTTQSPPSRDVSPTS), and 495 to 612 (RFTS…PPKP). Positions 119–276 (RKMQERMSTQ…EQLKRGNDSK (158 aa)) form a coiled coil. The span at 214–235 (SAEKRRSTEMEAQMEKQLSEFD) shows a compositional bias: basic and acidic residues. The span at 385 to 394 (GPSAGSASST) shows a compositional bias: low complexity. Polar residues predominate over residues 399–418 (NSTAPPTVQTPGIAPQSYSQ). Position 495 is an asymmetric dimethylarginine (Arg-495). A compositionally biased stretch (low complexity) spans 509–520 (AAPTGDGGTCPP). Positions 580-590 (TMASPPSSLPQ) are enriched in polar residues. ANK repeat units follow at residues 706–736 (GRPTLLQQAATQGNVTLLSMLLNEEGLDINY), 740–769 (DGHSALYSAAKNGHTDCVRLLLNAGAQVNA), 773–802 (NGFTPLCAAAAQGHFKCVELLISYDANINH), 806–835 (EGQTPLYLACKNGNKECIQLLLEAGTDRSV), 839–868 (DGWTPVHAAVDTGNVDSLKLLMYHRAPACR), and 909–939 (EGWTAAHIAASKGFKNCLEILCMHGGLEPER). The disordered stretch occupies residues 1448-1478 (ESGAWRKVSTSPRKKSGRFSPPSWNKPGLSE). Ser-1521 is subject to Phosphoserine. Disordered stretches follow at residues 1538–1595 (RSES…NSQS) and 1611–1642 (PRSKVTQCSQNTKRSSSSSNTRQIEINNNTKE). Positions 1539–1558 (SESDISKIADSRDDLRRFDG) are enriched in basic and acidic residues. Polar residues-rich tracts occupy residues 1559 to 1569 (SRNNPAFSTVN) and 1581 to 1595 (PLSSHETTECSNSQS). The span at 1619-1633 (SQNTKRSSSSSNTRQ) shows a compositional bias: low complexity.

Interacts with CTTN/cortactin SH3 domain. Interacts with STRN, STRN4/zinedin and MOB4/phocein; this interactions mediate the association with the STRIPAK core complex and may regulate dendritic spine distribution of the STRIPAK complex in hippocampal neurons. Activation of glutamate receptors weakens the interaction with STRN and STRN4.

It is found in the cytoplasm. The protein resides in the cell cortex. The protein localises to the cell projection. It localises to the dendritic spine. In terms of biological role, regulates the dendritic spine distribution of CTTN/cortactin in hippocampal neurons, and thus controls dendritic spinogenesis and dendritic spine maintenance. Associates with the striatin-interacting phosphatase and kinase (STRIPAK) core complex to regulate dendritic spine distribution of the STRIPAK complex in hippocampal neurons. This Neofelis nebulosa (Clouded leopard) protein is Cortactin-binding protein 2 (CTTNBP2).